A 426-amino-acid polypeptide reads, in one-letter code: 3-phosphoshikimate 1-carboxyvinyltransferase (426 aa).

The 3-phosphoshikimate site is built by lysine 21, serine 22, and arginine 26. Residue lysine 21 coordinates phosphoenolpyruvate. The phosphoenolpyruvate site is built by glycine 92 and arginine 122. Residues serine 167, serine 168, glutamine 169, serine 195, aspartate 315, and lysine 342 each coordinate 3-phosphoshikimate. Glutamine 169 provides a ligand contact to phosphoenolpyruvate. Residue aspartate 315 is the Proton acceptor of the active site. 2 residues coordinate phosphoenolpyruvate: arginine 346 and arginine 386.

This sequence belongs to the EPSP synthase family. In terms of assembly, monomer.

Its subcellular location is the cytoplasm. It carries out the reaction 3-phosphoshikimate + phosphoenolpyruvate = 5-O-(1-carboxyvinyl)-3-phosphoshikimate + phosphate. It functions in the pathway metabolic intermediate biosynthesis; chorismate biosynthesis. Its function is as follows. Catalyzes the transfer of the enolpyruvyl moiety of phosphoenolpyruvate (PEP) to the 5-hydroxyl of shikimate-3-phosphate (S3P) to produce enolpyruvyl shikimate-3-phosphate and inorganic phosphate. The polypeptide is 3-phosphoshikimate 1-carboxyvinyltransferase (Methanosphaera stadtmanae (strain ATCC 43021 / DSM 3091 / JCM 11832 / MCB-3)).